The following is a 262-amino-acid chain: Acyl-[acyl-carrier-protein]--UDP-N-acetylglucosamine O-acyltransferase (262 aa).

It belongs to the transferase hexapeptide repeat family. LpxA subfamily. In terms of assembly, homotrimer.

The protein localises to the cytoplasm. It carries out the reaction a (3R)-hydroxyacyl-[ACP] + UDP-N-acetyl-alpha-D-glucosamine = a UDP-3-O-[(3R)-3-hydroxyacyl]-N-acetyl-alpha-D-glucosamine + holo-[ACP]. Its pathway is glycolipid biosynthesis; lipid IV(A) biosynthesis; lipid IV(A) from (3R)-3-hydroxytetradecanoyl-[acyl-carrier-protein] and UDP-N-acetyl-alpha-D-glucosamine: step 1/6. Functionally, involved in the biosynthesis of lipid A, a phosphorylated glycolipid that anchors the lipopolysaccharide to the outer membrane of the cell. The sequence is that of Acyl-[acyl-carrier-protein]--UDP-N-acetylglucosamine O-acyltransferase from Salmonella arizonae (strain ATCC BAA-731 / CDC346-86 / RSK2980).